The sequence spans 388 residues: Single-stranded DNA-binding protein 3 (388 aa).

The residue at position 1 (Met1) is an N-acetylmethionine. Residues 16–48 enclose the LisH domain; sequence AREKLALYVYEYLLHVGAQKSAQTFLSEIRWEK. The disordered stretch occupies residues 101–388; that stretch reads VLGNIPPNDG…NYSPSMTMSV (288 aa). Residues 126-139 are compositionally biased toward pro residues; that stretch reads GSQPSPHAQPPPHN. Residues Arg155, Arg161, and Arg165 each carry the asymmetric dimethylarginine modification. Low complexity-rich tracts occupy residues 200 to 209 and 250 to 268; these read MQRMNPPRGM and PNSA…TYVG. Residues 272-282 are compositionally biased toward pro residues; the sequence is GGGPPGTPIMP. Positions 285–296 are enriched in polar residues; the sequence is ADSTNSSDNIYT. Residues 315–325 show a composition bias toward gly residues; it reads GSDGPMGGMGG. Residues 346–357 show a composition bias toward low complexity; sequence NSPNNISGISNP. Phosphoserine is present on residues Ser347, Ser352, and Ser355. Thr360 carries the post-translational modification Phosphothreonine. Polar residues predominate over residues 373–388; it reads HSFQNDNYSPSMTMSV. Phosphoserine is present on residues Ser381 and Ser387.

In terms of tissue distribution, highly expressed in all hematopoietic tissues, including spleen, lymph node, peripheral blood, bone marrow, thymus, and fetal liver, with highest expression in thymus and fetal liver. Expression is also high in heart, brain, kidney, and skeletal muscle.

The protein localises to the nucleus. May be involved in transcription regulation of the alpha 2(I) collagen gene where it binds to the single-stranded polypyrimidine sequences in the promoter region. This is Single-stranded DNA-binding protein 3 (SSBP3) from Homo sapiens (Human).